Here is a 127-residue protein sequence, read N- to C-terminus: Fluoride-specific ion channel FluC (127 aa).

The next 4 membrane-spanning stretches (helical) occupy residues 4–24 (LSVL…RYLI), 38–58 (YGTL…IAAF), 71–91 (IIGL…MDNV), and 104–124 (LNVL…FQLL). Residues G78 and T81 each contribute to the Na(+) site.

Belongs to the fluoride channel Fluc/FEX (TC 1.A.43) family.

Its subcellular location is the cell inner membrane. The enzyme catalyses fluoride(in) = fluoride(out). With respect to regulation, na(+) is not transported, but it plays an essential structural role and its presence is essential for fluoride channel function. Its function is as follows. Fluoride-specific ion channel. Important for reducing fluoride concentration in the cell, thus reducing its toxicity. The chain is Fluoride-specific ion channel FluC from Vibrio campbellii (strain ATCC BAA-1116).